A 127-amino-acid chain; its full sequence is DNA-directed RNA polymerase subunit omega (127 aa).

Belongs to the RNA polymerase subunit omega family. The RNAP catalytic core consists of 2 alpha, 1 beta, 1 beta' and 1 omega subunit. When a sigma factor is associated with the core the holoenzyme is formed, which can initiate transcription.

The catalysed reaction is RNA(n) + a ribonucleoside 5'-triphosphate = RNA(n+1) + diphosphate. Promotes RNA polymerase assembly. Latches the N- and C-terminal regions of the beta' subunit thereby facilitating its interaction with the beta and alpha subunits. In Rickettsia prowazekii (strain Madrid E), this protein is DNA-directed RNA polymerase subunit omega (rpoZ).